A 250-amino-acid polypeptide reads, in one-letter code: 2,3-bisphosphoglycerate-dependent phosphoglycerate mutase (250 aa).

Substrate-binding positions include 10–17, 23–24, Arg62, 89–92, Lys100, 116–117, and 185–186; these read RHGESQWN, TG, ERHY, RR, and GN. His11 acts as the Tele-phosphohistidine intermediate in catalysis. Residue Glu89 is the Proton donor/acceptor of the active site.

Belongs to the phosphoglycerate mutase family. BPG-dependent PGAM subfamily. Homodimer.

The enzyme catalyses (2R)-2-phosphoglycerate = (2R)-3-phosphoglycerate. It functions in the pathway carbohydrate degradation; glycolysis; pyruvate from D-glyceraldehyde 3-phosphate: step 3/5. Functionally, catalyzes the interconversion of 2-phosphoglycerate and 3-phosphoglycerate. The sequence is that of 2,3-bisphosphoglycerate-dependent phosphoglycerate mutase from Yersinia pseudotuberculosis serotype IB (strain PB1/+).